Consider the following 61-residue polypeptide: Large ribosomal subunit protein bL32 (61 aa).

The span at 1-18 (MAIVPKRKTSKQRKRKRQ) shows a compositional bias: basic residues. The tract at residues 1–20 (MAIVPKRKTSKQRKRKRQTH) is disordered.

This sequence belongs to the bacterial ribosomal protein bL32 family.

The chain is Large ribosomal subunit protein bL32 (rpmF) from Mycoplasmopsis pulmonis (strain UAB CTIP) (Mycoplasma pulmonis).